Reading from the N-terminus, the 833-residue chain is P protein (833 aa).

The Cytoplasmic segment spans residues 1–172 (MRLENKDIRL…QVSKLGCCVR (172 aa)). The chain crosses the membrane as a helical span at residues 173–193 (WIKITGLFVFVVLCSILFSLY). At 194–325 (PDQGKFWQLL…QFLGASVEAQ (132 aa)) the chain is on the extracellular side. N-linked (GlcNAc...) asparagine glycans are attached at residues asparagine 210, asparagine 214, and asparagine 269. Residues 326–346 (VASAVAILAGVYTLIIFEIVH) traverse the membrane as a helical segment. At 347–348 (RT) the chain is on the cytoplasmic side. A helical transmembrane segment spans residues 349–369 (LAAMLGALAALAALAVVGDRP). Residues 370-381 (SLTHVVEWIDFE) are Extracellular-facing. Residues 382–402 (TLALLFGMMILVAVFSETGFF) traverse the membrane as a helical segment. The Cytoplasmic portion of the chain corresponds to 403–417 (DYCAVKAYQLSRGRV). Residues 418-438 (WAMIFMLCLMAAILSAFLDNV) traverse the membrane as a helical segment. Residues 439 to 501 (TTMLLFTPVT…ELRKMGLDFA (63 aa)) are Extracellular-facing. A helical membrane pass occupies residues 502–522 (GFTAHMFLGICLVLLVSFPLL). Residues 523–617 (RLLYWNKKLY…RKHRISDRSL (95 aa)) lie on the Cytoplasmic side of the membrane. A helical membrane pass occupies residues 618 to 638 (LVKCLTVLGFVISMFFLNSFV). A topological domain (extracellular) is located at residue proline 639. The helical transmembrane segment at 640 to 660 (GIHLDLGWIAILGAIWLLILA) threads the bilayer. The Cytoplasmic portion of the chain corresponds to 661-675 (DIHDFEIILHRVEWA). The helical transmembrane segment at 676 to 696 (TLLFFAALFVLMEALTHLHLV) threads the bilayer. Over 697-718 (EYVGEQTALLIKMVPEDQRFAA) the chain is Extracellular. The chain crosses the membrane as a helical span at residues 719–739 (AIVLIVWVSALASSLIDNIPF). Residues 740–759 (TATMIPVLLNLSQDPEISLP) lie on the Cytoplasmic side of the membrane. Residues 760-780 (ALPLMYALALGACLGGNGTLI) form a helical membrane-spanning segment. Topologically, residues 781-810 (GASTNVVCAGIAEKHGYGFSFMEFFRLGFP) are extracellular. Residues 811–831 (VMLMSCTIGMCYLLIAHIVVG) form a helical membrane-spanning segment. The Cytoplasmic segment spans residues 832-833 (WN).

It belongs to the CitM (TC 2.A.11) transporter family. In terms of tissue distribution, most abundant in melanocytes. Also present in neonatal and adult eye tissue presumably as a result of expression in the retinal pigmented epithelium and choroid body, known sites of melanogenesis in the eye. Small but detectable amounts also observed in fetal, neonatal and adult brain. Moderate amounts detected in adult testis and ovary. Not detected in heart, kidney, spleen, liver or thymus.

Its subcellular location is the melanosome membrane. The catalysed reaction is chloride(in) = chloride(out). Functionally, contributes to a melanosome-specific anion (chloride) current that modulates melanosomal pH for optimal tyrosinase activity required for melanogenesis and the melanosome maturation. One of the components of the mammalian pigmentary system. May serve as a key control point at which color variation is determined. Major determinant of eye color. Seems to regulate the post-translational processing of tyrosinase, which catalyzes the limiting reaction in melanin synthesis. This is P protein (Oca2) from Mus musculus (Mouse).